A 97-amino-acid polypeptide reads, in one-letter code: Protein ParC (97 aa).

This chain is Protein ParC (parC), found in Escherichia coli.